The sequence spans 118 residues: Cell division topological specificity factor (118 aa).

A disordered region spans residues 86-118 (RSQAKAVSSQENGASSQEAVSSQESVSTPGAME). The span at 99-112 (ASSQEAVSSQESVS) shows a compositional bias: low complexity.

It belongs to the MinE family.

Functionally, prevents the cell division inhibition by proteins MinC and MinD at internal division sites while permitting inhibition at polar sites. This ensures cell division at the proper site by restricting the formation of a division septum at the midpoint of the long axis of the cell. The chain is Cell division topological specificity factor from Prochlorococcus marinus (strain MIT 9313).